The chain runs to 188 residues: Peptidyl-tRNA hydrolase (188 aa).

Tyr-15 serves as a coordination point for tRNA. His-20 functions as the Proton acceptor in the catalytic mechanism. Phe-66, Asn-68, and Asn-114 together coordinate tRNA.

It belongs to the PTH family. As to quaternary structure, monomer.

The protein localises to the cytoplasm. It catalyses the reaction an N-acyl-L-alpha-aminoacyl-tRNA + H2O = an N-acyl-L-amino acid + a tRNA + H(+). Functionally, hydrolyzes ribosome-free peptidyl-tRNAs (with 1 or more amino acids incorporated), which drop off the ribosome during protein synthesis, or as a result of ribosome stalling. In terms of biological role, catalyzes the release of premature peptidyl moieties from peptidyl-tRNA molecules trapped in stalled 50S ribosomal subunits, and thus maintains levels of free tRNAs and 50S ribosomes. The protein is Peptidyl-tRNA hydrolase of Lactococcus lactis subsp. lactis (strain IL1403) (Streptococcus lactis).